Here is a 189-residue protein sequence, read N- to C-terminus: SAGA-associated factor 11 homolog (189 aa).

The segment at 94-115 adopts an SGF11-type zinc-finger fold; it reads CTCPNCDRLVAATRFAPHLEKC. The disordered stretch occupies residues 128-189; that stretch reads RRLATKEGSS…GSKKNNGKTF (62 aa). Over residues 136–145 the composition is skewed to low complexity; it reads SSASSTSTST. Ser-165 bears the Phosphoserine mark. Positions 175 to 189 are enriched in low complexity; it reads NSRNNGSKKNNGKTF.

This sequence belongs to the SGF11 family. In terms of assembly, component of some SAGA transcription coactivator-HAT complexes, at least composed of Ada2b, not/nonstop, Pcaf/Gcn5, Sgf11 and Spt3. Within the SAGA complex, Sgf11, e(y)2, and not/nonstop form an additional subcomplex of SAGA called the DUB module (deubiquitination module). Interacts directly with not/nonstop. Interacts with the AMEX complex component xmas-2. Interacts with Cbp80; important for promoter recruitment of Sgf11 that is not associated with the DUB module.

The protein localises to the nucleus. The protein resides in the nucleoplasm. Its subcellular location is the cytoplasm. Functionally, component of the transcription regulatory histone acetylation (HAT) complex SAGA, a multiprotein complex that activates transcription by remodeling chromatin and mediating histone acetylation and deubiquitination. Within the SAGA complex, participates in a subcomplex that specifically deubiquitinates histone H2B. The SAGA complex is recruited to specific gene promoters by activators, where it is required for transcription. Required for nuclear receptor-mediated transactivation. Binds independently on SAGA to promoters in an RNA-dependent manner. Binds to mRNA and is essential for total mRNA export from the nucleus. Required to counteract heterochromatin silencing. Controls the development of neuronal connectivity in visual system by being required for accurate axon targeting in the optic lobe. Required for expression of ecdysone-induced genes such as br/broad. The sequence is that of SAGA-associated factor 11 homolog from Drosophila virilis (Fruit fly).